Here is a 110-residue protein sequence, read N- to C-terminus: MKKALQVAMFSLFTVIGFNAQANEHHHETMSEAQPQVISATGVVKGIDLESKKITIHHDPIAAVNWPEMTMRFTITPQTKMSEIKTGDKVAFNFVQQGNLSLLQDIKVSQ.

The N-terminal stretch at 1 to 21 (MKKALQVAMFSLFTVIGFNAQ) is a signal peptide.

In terms of assembly, the cus efflux system is composed of CusA, CusB, CusC and CusF. Interacts with copper-exporting P-type ATPase CopA; when this protein is precharged with copper it binds very little CopA.

It is found in the periplasm. Its function is as follows. Part of a cation efflux system that mediates resistance to copper and silver. Binds one copper per polypeptide. This Escherichia coli (strain K12) protein is Cation efflux system protein CusF (cusF).